The following is a 348-amino-acid chain: Photosystem II protein D1 (348 aa).

The next 3 helical transmembrane spans lie at 33 to 50, 122 to 137, and 146 to 160; these read YIGW…LATV, HFIF…EWEF, and WIFV…AASA. Histidine 122 is a binding site for chlorophyll a. Residue tyrosine 130 participates in pheophytin a binding. [CaMn4O5] cluster is bound by residues aspartate 174 and glutamate 193. The helical transmembrane segment at 201–222 threads the bilayer; that stretch reads FHILGVAAVFGGSLFSAMHGSL. Residue histidine 202 participates in chlorophyll a binding. Residues histidine 219 and 268–269 contribute to the a quinone site; that span reads SF. A Fe cation-binding site is contributed by histidine 219. Histidine 276 provides a ligand contact to Fe cation. Residues 278-292 form a helical membrane-spanning segment; that stretch reads FLAAWPVIGIWFTSL. 4 residues coordinate [CaMn4O5] cluster: histidine 336, glutamate 337, aspartate 346, and alanine 348.

It belongs to the reaction center PufL/M/PsbA/D family. In terms of assembly, PSII is composed of 1 copy each of membrane proteins PsbA, PsbB, PsbC, PsbD, PsbE, PsbF, PsbH, PsbI, PsbJ, PsbK, PsbL, PsbM, PsbT, PsbX, PsbY, PsbZ, Psb30/Ycf12, at least 3 peripheral proteins of the oxygen-evolving complex and a large number of cofactors. It forms dimeric complexes. It depends on The D1/D2 heterodimer binds P680, chlorophylls that are the primary electron donor of PSII, and subsequent electron acceptors. It shares a non-heme iron and each subunit binds pheophytin, quinone, additional chlorophylls, carotenoids and lipids. D1 provides most of the ligands for the Mn4-Ca-O5 cluster of the oxygen-evolving complex (OEC). There is also a Cl(-1) ion associated with D1 and D2, which is required for oxygen evolution. The PSII complex binds additional chlorophylls, carotenoids and specific lipids. as a cofactor. Tyr-165 forms a radical intermediate that is referred to as redox-active TyrZ, YZ or Y-Z.

It localises to the plastid. The protein resides in the chloroplast thylakoid membrane. It catalyses the reaction 2 a plastoquinone + 4 hnu + 2 H2O = 2 a plastoquinol + O2. In terms of biological role, photosystem II (PSII) is a light-driven water:plastoquinone oxidoreductase that uses light energy to abstract electrons from H(2)O, generating O(2) and a proton gradient subsequently used for ATP formation. It consists of a core antenna complex that captures photons, and an electron transfer chain that converts photonic excitation into a charge separation. The D1/D2 (PsbA/PsbD) reaction center heterodimer binds P680, the primary electron donor of PSII as well as several subsequent electron acceptors. This Heterocapsa triquetra (Dinoflagellate) protein is Photosystem II protein D1.